Reading from the N-terminus, the 260-residue chain is Octanoyltransferase (260 aa).

In terms of domain architecture, BPL/LPL catalytic spans Pro-42–Ala-241. Substrate contacts are provided by residues Arg-97 to His-104, Ala-172 to Gly-174, and Gly-185 to Ala-187. Catalysis depends on Cys-203, which acts as the Acyl-thioester intermediate.

The protein belongs to the LipB family.

The protein resides in the cytoplasm. It catalyses the reaction octanoyl-[ACP] + L-lysyl-[protein] = N(6)-octanoyl-L-lysyl-[protein] + holo-[ACP] + H(+). Its pathway is protein modification; protein lipoylation via endogenous pathway; protein N(6)-(lipoyl)lysine from octanoyl-[acyl-carrier-protein]: step 1/2. Functionally, catalyzes the transfer of endogenously produced octanoic acid from octanoyl-acyl-carrier-protein onto the lipoyl domains of lipoate-dependent enzymes. Lipoyl-ACP can also act as a substrate although octanoyl-ACP is likely to be the physiological substrate. The polypeptide is Octanoyltransferase (Synechococcus sp. (strain JA-3-3Ab) (Cyanobacteria bacterium Yellowstone A-Prime)).